The following is a 289-amino-acid chain: ATP synthase subunit a (289 aa).

A run of 6 helical transmembrane segments spans residues 43-63, 104-124, 160-180, 193-213, 232-252, and 259-279; these read AFHL…VLIF, IAPL…VDLI, LSVF…GGFI, IFVQ…TLIA, VFIL…GLGV, and AVFH…LTIV.

Belongs to the ATPase A chain family. As to quaternary structure, F-type ATPases have 2 components, CF(1) - the catalytic core - and CF(0) - the membrane proton channel. CF(1) has five subunits: alpha(3), beta(3), gamma(1), delta(1), epsilon(1). CF(0) has three main subunits: a(1), b(2) and c(9-12). The alpha and beta chains form an alternating ring which encloses part of the gamma chain. CF(1) is attached to CF(0) by a central stalk formed by the gamma and epsilon chains, while a peripheral stalk is formed by the delta and b chains.

The protein resides in the cell inner membrane. Key component of the proton channel; it plays a direct role in the translocation of protons across the membrane. The polypeptide is ATP synthase subunit a (Pseudomonas fluorescens (strain SBW25)).